A 281-amino-acid polypeptide reads, in one-letter code: MTKYTNADELKSLTLGQKTEYKHTYEPELLQAVPRSLNRDDLALGDELPFVGCDVWTLYELSWLNQNGLPQVAVGEVALPATSPNLVESKSFKLYLNSFNQTKFTSWDEVKETLVKDLSACAGETVKVDIFPVQRYSQQPIVDMQGECIDDQDIIIDDYEFNAAYLESSTSDVNIEETLHSHLLKSNCLITNQPDWGSVEIQYKGKKIDREKLLRYLISFRQHNEFHEQCVERIYTDIMKYCAPESLTVFARYTRRGGLDINPFRSSHLLAPKDNLRLARQ.

87 to 89 is a substrate binding site; it reads VES. An NADPH-binding site is contributed by 89–90; the sequence is SK. Cys-188 acts as the Thioimide intermediate in catalysis. Catalysis depends on Asp-195, which acts as the Proton donor. A substrate-binding site is contributed by 227 to 228; sequence HE. Residue 256–257 participates in NADPH binding; sequence RG.

It belongs to the GTP cyclohydrolase I family. QueF type 2 subfamily. In terms of assembly, homodimer.

The protein localises to the cytoplasm. It carries out the reaction 7-aminomethyl-7-carbaguanine + 2 NADP(+) = 7-cyano-7-deazaguanine + 2 NADPH + 3 H(+). Its pathway is tRNA modification; tRNA-queuosine biosynthesis. In terms of biological role, catalyzes the NADPH-dependent reduction of 7-cyano-7-deazaguanine (preQ0) to 7-aminomethyl-7-deazaguanine (preQ1). In Aliivibrio fischeri (strain ATCC 700601 / ES114) (Vibrio fischeri), this protein is NADPH-dependent 7-cyano-7-deazaguanine reductase.